The primary structure comprises 204 residues: Venom allergen 5 (204 aa).

4 cysteine pairs are disulfide-bonded: Cys-4-Cys-17, Cys-8-Cys-101, Cys-26-Cys-94, and Cys-170-Cys-187. Residues 45 to 189 (LKEHNDFRQK…WHKHYLVCNY (145 aa)) form the SCP domain.

The protein belongs to the CRISP family. Venom allergen 5-like subfamily. In terms of tissue distribution, expressed by the venom gland.

Its subcellular location is the secreted. The sequence is that of Venom allergen 5 from Vespula maculifrons (Eastern yellow jacket).